Reading from the N-terminus, the 472-residue chain is 3beta,22alpha-dihydroxysteroid 3-dehydrogenase (472 aa).

Residues 1–21 (MAFTAFLLLLSSIAAGFLLLL) traverse the membrane as a helical segment. Position 418 (Cys-418) interacts with heme.

The protein belongs to the cytochrome P450 family. Heme is required as a cofactor.

It is found in the membrane. It catalyses the reaction (22S)-22-hydroxycampesterol + reduced [NADPH--hemoprotein reductase] + O2 = (22S)-22-hydroxycampest-4-en-3-one + oxidized [NADPH--hemoprotein reductase] + 2 H2O + H(+). The catalysed reaction is 6-deoxoteasterone + reduced [NADPH--hemoprotein reductase] + O2 = 3-dehydro-6-deoxoteasterone + oxidized [NADPH--hemoprotein reductase] + 2 H2O + H(+). It carries out the reaction 6-deoxycathasterone + reduced [NADPH--hemoprotein reductase] + O2 = (22S,24R)-22-hydroxy-5alpha-ergostan-3-one + oxidized [NADPH--hemoprotein reductase] + 2 H2O + H(+). The enzyme catalyses (22R,23R)-22,23-dihydroxycampesterol + reduced [NADPH--hemoprotein reductase] + O2 = (22R,23R)-22,23-dihydroxycampest-4-en-3-one + oxidized [NADPH--hemoprotein reductase] + 2 H2O + H(+). It participates in plant hormone biosynthesis; brassinosteroid biosynthesis. Its function is as follows. Catalyzes C3-oxidation steps in brassinosteroids biosynthesis. Converts (22S)-22-hydroxycampesterol (22-OHCR) to (22S,24R)-22-hydroxyergost-4-en-3-one (22-hydroxy-campesta-4-en-3-one, 22-OH-4-en-3-one), 6-deoxocathasterone (6-deoxoCT) to (22S,24R)-22-hydroxy-5alpha-ergostan-3-one (22-hydroxy-campesta-3-one, 22-OH-3-one), (22R,23R)-22,23-dihydroxycampesterol (22,23-diOHCR) to (22R,23R)-22,23-dihydroxy-campest-4-en-3-one (22,23-diOH-4-en-3-one), and 6-deoxoteasterone (6-deoxoTE) to 3-dehydro-6-deoxoteasterone (6-deoxo3DT, 6-deoxo-3-DHT). The sequence is that of 3beta,22alpha-dihydroxysteroid 3-dehydrogenase from Arabidopsis thaliana (Mouse-ear cress).